The primary structure comprises 68 residues: Small ribosomal subunit protein bS21 (68 aa).

It belongs to the bacterial ribosomal protein bS21 family.

The sequence is that of Small ribosomal subunit protein bS21 from Jannaschia sp. (strain CCS1).